Consider the following 91-residue polypeptide: DNA-directed RNA polymerase subunit omega (91 aa).

This sequence belongs to the RNA polymerase subunit omega family. As to quaternary structure, the RNAP catalytic core consists of 2 alpha, 1 beta, 1 beta' and 1 omega subunit. When a sigma factor is associated with the core the holoenzyme is formed, which can initiate transcription.

It carries out the reaction RNA(n) + a ribonucleoside 5'-triphosphate = RNA(n+1) + diphosphate. Promotes RNA polymerase assembly. Latches the N- and C-terminal regions of the beta' subunit thereby facilitating its interaction with the beta and alpha subunits. The chain is DNA-directed RNA polymerase subunit omega from Shigella flexneri.